An 811-amino-acid polypeptide reads, in one-letter code: Probable inorganic carbon transporter subunit DabA (811 aa).

Residues cysteine 336, aspartate 338, histidine 498, and cysteine 513 each coordinate Zn(2+).

Belongs to the inorganic carbon transporter (TC 9.A.2) DabA family. As to quaternary structure, forms a complex with DabB. Zn(2+) serves as cofactor.

It is found in the cell inner membrane. Functionally, part of an energy-coupled inorganic carbon pump. The chain is Probable inorganic carbon transporter subunit DabA from Azorhizobium caulinodans (strain ATCC 43989 / DSM 5975 / JCM 20966 / LMG 6465 / NBRC 14845 / NCIMB 13405 / ORS 571).